The chain runs to 565 residues: Arginine--tRNA ligase (565 aa).

Positions 128–138 (ANPTGPLHVGH) match the 'HIGH' region motif.

It belongs to the class-I aminoacyl-tRNA synthetase family. Monomer.

The protein resides in the cytoplasm. The enzyme catalyses tRNA(Arg) + L-arginine + ATP = L-arginyl-tRNA(Arg) + AMP + diphosphate. The chain is Arginine--tRNA ligase from Albidiferax ferrireducens (strain ATCC BAA-621 / DSM 15236 / T118) (Rhodoferax ferrireducens).